Consider the following 346-residue polypeptide: Upstream stimulatory factor 2 (346 aa).

Disordered regions lie at residues 1 to 44 and 215 to 244; these read MDML…PGAE and APRT…NEVE. Positions 11–20 are enriched in low complexity; it reads ASSATAAAAA. The span at 226-244 shows a compositional bias: basic and acidic residues; sequence DGTRTPRDERRRAQHNEVE. Residues 235 to 290 enclose the bHLH domain; that stretch reads RRRAQHNEVERRRRDKINNWIVQLSKIIPDCHADNSKTGASKGGILSKACDYIREL. Positions 307 to 328 are leucine-zipper; sequence LQMDNELLRQQIEELKNENALL.

Efficient DNA binding requires dimerization with another bHLH protein. Binds DNA as a homodimer or a heterodimer (USF1/USF2). Interacts with MAF.

The protein resides in the nucleus. In terms of biological role, transcription factor that binds to a symmetrical DNA sequence (E-boxes) (5'-CACGTG-3') that is found in a variety of viral and cellular promoters. The protein is Upstream stimulatory factor 2 (Usf2) of Mus musculus (Mouse).